A 335-amino-acid chain; its full sequence is Nucleoid-associated protein CKO_00588 (335 aa).

The protein belongs to the YejK family.

Its subcellular location is the cytoplasm. It localises to the nucleoid. This is Nucleoid-associated protein CKO_00588 from Citrobacter koseri (strain ATCC BAA-895 / CDC 4225-83 / SGSC4696).